Here is a 407-residue protein sequence, read N- to C-terminus: Patatin-like protein 2 (407 aa).

The PNPLA domain maps to 22-228; that stretch reads LSIDGGGIRG…AANNPALLAI (207 aa). Positions 26–31 match the GXGXXG motif; that stretch reads GGGIRG. The GXSXG motif lies at 64–68; that stretch reads GTSTG. Catalysis depends on Ser-66, which acts as the Nucleophile. Asp-215 (proton acceptor) is an active-site residue. Residues 215–217 carry the DGA/G motif; sequence DGG. Phosphoserine is present on Ser-398.

Belongs to the patatin family. As to expression, expressed specifically in roots.

It is found in the cytoplasm. Functionally, possesses non-specific lipolytic acyl hydrolase (LAH) activity. Catalyzes the hydrolysis of the galactolipids monogalactosyldiacylglycerol (MGDG) and digalactosyldiacylglycerol (DGDG), and less efficiently the phoshpolipids phosphatidylcholine (PC), phosphatidylethanolamine (PE), phosphatidylglycerol (PG), phosphatidic acid (PA), phosphatidylserine (PS) and phosphatidylinositol (PI). Favors the release of fatty acid at the sn-1 position for PC or PE and the sn-2 position for PG, PA, PS and PI. Negatively affects disease resistance to the necrotic fungal pathogen Botrytis cinerea and the avirulent bacteria Pseudomonas syringae by promoting cell death and reducing the efficiency of the hypersensitive response, respectively. However, PLP2 contributes to resistance to cucumber mosaic virus (CMV), an obligate parasite inducing hypersensitive response. May negatively regulate oxylipin production, possibly via participating in membrane repair that includes removal of oxidatively modified lipids. The protein is Patatin-like protein 2 (PLP2) of Arabidopsis thaliana (Mouse-ear cress).